Here is a 156-residue protein sequence, read N- to C-terminus: S-ribosylhomocysteine lyase (156 aa).

Residues His-56, His-60, and Cys-123 each coordinate Fe cation.

It belongs to the LuxS family. As to quaternary structure, homodimer. Requires Fe cation as cofactor.

It catalyses the reaction S-(5-deoxy-D-ribos-5-yl)-L-homocysteine = (S)-4,5-dihydroxypentane-2,3-dione + L-homocysteine. In terms of biological role, involved in the synthesis of autoinducer 2 (AI-2) which is secreted by bacteria and is used to communicate both the cell density and the metabolic potential of the environment. The regulation of gene expression in response to changes in cell density is called quorum sensing. Catalyzes the transformation of S-ribosylhomocysteine (RHC) to homocysteine (HC) and 4,5-dihydroxy-2,3-pentadione (DPD). The protein is S-ribosylhomocysteine lyase of Staphylococcus haemolyticus (strain JCSC1435).